An 842-amino-acid polypeptide reads, in one-letter code: Oligopeptide transporter phomP2' (842 aa).

Residues 1–58 (MEADPKVPFTDEMNIQDEHNWESGSWSSSRRSNDSNVTLLSRRSSVEQHEDERQKDSD) are disordered. A compositionally biased stretch (low complexity) spans 23–36 (SGSWSSSRRSNDSN). N-linked (GlcNAc...) asparagine glycosylation is found at Asn-33 and Asn-36. Residues 44–58 (SSVEQHEDERQKDSD) show a composition bias toward basic and acidic residues. A run of 6 helical transmembrane segments spans residues 105–125 (VWLL…VYYF), 177–197 (ALVV…GPLS), 210–230 (PWAI…VGLY), 268–288 (VFMA…FVFP), 315–335 (GFGL…SPLF), and 345–365 (FVGA…SDAL). Asn-386 and Asn-398 each carry an N-linked (GlcNAc...) asparagine glycan. 4 helical membrane passes run 415–435 (AMHF…AVLF), 478–498 (AWYA…LYAG), 505–525 (WGLQ…GMLF), and 585–605 (WELL…NWAV). Residues 629–649 (QGLGLGQGGGGGGGGGGGGGQ) are compositionally biased toward gly residues. A disordered region spans residues 629-657 (QGLGLGQGGGGGGGGGGGGGQQQRAAGAH). The next 3 helical transmembrane spans lie at 668-688 (NFFS…FGGG), 700-720 (WLLP…WLIH), and 731-751 (WPLH…FPTT). Asn-752 carries N-linked (GlcNAc...) asparagine glycosylation. The helical transmembrane segment at 784-804 (AGLDCGAQLVQMVLGLAFLVF) threads the bilayer.

It belongs to the oligopeptide OPT transporter family.

It is found in the membrane. Oligopeptide transporter; part of the gene cluster that mediates the biosynthesis of the phomopsins, a group of hexapeptide mycotoxins which infects lupins and causes lupinosis disease in livestock. This Diaporthe leptostromiformis (Lupinosis disease fungus) protein is Oligopeptide transporter phomP2'.